The following is a 372-amino-acid chain: NAD(P)H-quinone oxidoreductase subunit 1 (372 aa).

8 consecutive transmembrane segments (helical) span residues 27–47, 97–117, 128–148, 166–186, 204–224, 266–286, 308–328, and 347–367; these read LLWIPLPMLLVLVSAVIGVLV, VLFTVGPILVLVPVILSWLIV, VGIGIFLWIALSSIQPIGLLM, AAQSISYEIPLALAVLAIVMM, FLSWNIWRQPVGFIIFWICAL, VLSALLVSVLYLGGWGFPISI, SLGIVMTILKAYLLVFLAILL, and FLLPISLVNLLVTASLKLAFP.

It belongs to the complex I subunit 1 family. As to quaternary structure, NDH-1 is composed of at least 11 different subunits.

The protein resides in the cellular thylakoid membrane. It carries out the reaction a plastoquinone + NADH + (n+1) H(+)(in) = a plastoquinol + NAD(+) + n H(+)(out). The enzyme catalyses a plastoquinone + NADPH + (n+1) H(+)(in) = a plastoquinol + NADP(+) + n H(+)(out). Functionally, NDH-1 shuttles electrons from an unknown electron donor, via FMN and iron-sulfur (Fe-S) centers, to quinones in the respiratory and/or the photosynthetic chain. The immediate electron acceptor for the enzyme in this species is believed to be plastoquinone. Couples the redox reaction to proton translocation, and thus conserves the redox energy in a proton gradient. The polypeptide is NAD(P)H-quinone oxidoreductase subunit 1 (Prochlorococcus marinus (strain NATL2A)).